The following is a 160-amino-acid chain: Cytochrome b6-f complex subunit 4 (160 aa).

The next 3 membrane-spanning stretches (helical) occupy residues 36-56 (ILFT…GLAI), 95-115 (LLGI…PFIE), and 131-151 (AVFL…CFPI).

The protein belongs to the cytochrome b family. PetD subfamily. In terms of assembly, the 4 large subunits of the cytochrome b6-f complex are cytochrome b6, subunit IV (17 kDa polypeptide, PetD), cytochrome f and the Rieske protein, while the 4 small subunits are PetG, PetL, PetM and PetN. The complex functions as a dimer.

The protein localises to the cellular thylakoid membrane. Its function is as follows. Component of the cytochrome b6-f complex, which mediates electron transfer between photosystem II (PSII) and photosystem I (PSI), cyclic electron flow around PSI, and state transitions. The polypeptide is Cytochrome b6-f complex subunit 4 (Picosynechococcus sp. (strain ATCC 27264 / PCC 7002 / PR-6) (Agmenellum quadruplicatum)).